A 515-amino-acid chain; its full sequence is Bifunctional purine biosynthesis protein PurH (515 aa).

In terms of domain architecture, MGS-like spans Met1–Val145.

It belongs to the PurH family.

The enzyme catalyses (6R)-10-formyltetrahydrofolate + 5-amino-1-(5-phospho-beta-D-ribosyl)imidazole-4-carboxamide = 5-formamido-1-(5-phospho-D-ribosyl)imidazole-4-carboxamide + (6S)-5,6,7,8-tetrahydrofolate. The catalysed reaction is IMP + H2O = 5-formamido-1-(5-phospho-D-ribosyl)imidazole-4-carboxamide. It participates in purine metabolism; IMP biosynthesis via de novo pathway; 5-formamido-1-(5-phospho-D-ribosyl)imidazole-4-carboxamide from 5-amino-1-(5-phospho-D-ribosyl)imidazole-4-carboxamide (10-formyl THF route): step 1/1. The protein operates within purine metabolism; IMP biosynthesis via de novo pathway; IMP from 5-formamido-1-(5-phospho-D-ribosyl)imidazole-4-carboxamide: step 1/1. The chain is Bifunctional purine biosynthesis protein PurH from Streptococcus agalactiae serotype III (strain NEM316).